A 401-amino-acid chain; its full sequence is MTERIVLAYSGGLDTSVAIGWIGEATGAEVIAVAVDVGQGGESLETIRQRALGCGAVEAYVADARDEFANEYAMPTLKANALYQGHYPLVSAISRPVIVKHLVKAAREFGATTVAHGCTGKGNDQVRFEVGIQTLGPDLKCIAPVRDLALTRDKAIAFAEEKGLPIETTKKNPYSIDQNVWGRAVETGYLEDIWNAPTKDIYDYTATPEFPPAPDEVIISFQAGVPVAIDGVKVTPLQAIQELNRRAGAQGVGRIDVVEDRLVGIKSREIYEAPGAMALITAHKHLEDITIEREQARFKATVGQRWAELVYDGQWFSPLKRSLDAFIEDTQQYVSGDIRMVLHGGQAVVNGRRSETSLYDFDLATYDTGDTFDQSMARGFIELWGMSSKVASGRDLRVAGQ.

8–16 contacts ATP; it reads AYSGGLDTS. Tyr87 is a binding site for L-citrulline. Gly117 contacts ATP. L-aspartate-binding residues include Thr119, Asn123, and Asp124. Asn123 serves as a coordination point for L-citrulline. Positions 127, 175, 259, and 271 each coordinate L-citrulline.

The protein belongs to the argininosuccinate synthase family. Type 1 subfamily. As to quaternary structure, homotetramer.

It localises to the cytoplasm. It catalyses the reaction L-citrulline + L-aspartate + ATP = 2-(N(omega)-L-arginino)succinate + AMP + diphosphate + H(+). Its pathway is amino-acid biosynthesis; L-arginine biosynthesis; L-arginine from L-ornithine and carbamoyl phosphate: step 2/3. The sequence is that of Argininosuccinate synthase from Paenarthrobacter aurescens (strain TC1).